We begin with the raw amino-acid sequence, 716 residues long: Polyribonucleotide nucleotidyltransferase (716 aa).

Mg(2+) contacts are provided by aspartate 480 and aspartate 486. The KH domain maps to 547–606 (PKIVQLQIDIDKISLVIGSTGKTVKAITDEFEVKVQIEQNGKIILFGDDDFKMQKAKERI). The S1 motif domain maps to 616–711 (GEIYEGTVKK…KFGKIDLEIV (96 aa)).

It belongs to the polyribonucleotide nucleotidyltransferase family. Mg(2+) serves as cofactor.

Its subcellular location is the cytoplasm. It catalyses the reaction RNA(n+1) + phosphate = RNA(n) + a ribonucleoside 5'-diphosphate. Involved in mRNA degradation. Catalyzes the phosphorolysis of single-stranded polyribonucleotides processively in the 3'- to 5'-direction. This is Polyribonucleotide nucleotidyltransferase from Borreliella burgdorferi (strain ATCC 35210 / DSM 4680 / CIP 102532 / B31) (Borrelia burgdorferi).